Reading from the N-terminus, the 322-residue chain is Lipoyl synthase (322 aa).

Positions 1-14 (MKTLDENQAPSRQT) are enriched in polar residues. Residues 1–30 (MKTLDENQAPSRQTPESHRRGAEKLSRIPV) form a disordered region. Residues 15 to 26 (PESHRRGAEKLS) show a composition bias toward basic and acidic residues. The [4Fe-4S] cluster site is built by Cys70, Cys75, Cys81, Cys96, Cys100, Cys103, and Ser310. One can recognise a Radical SAM core domain in the interval 82-299 (FGHGTATFMI…AGYARELGFA (218 aa)).

The protein belongs to the radical SAM superfamily. Lipoyl synthase family. [4Fe-4S] cluster is required as a cofactor.

The protein resides in the cytoplasm. The enzyme catalyses [[Fe-S] cluster scaffold protein carrying a second [4Fe-4S](2+) cluster] + N(6)-octanoyl-L-lysyl-[protein] + 2 oxidized [2Fe-2S]-[ferredoxin] + 2 S-adenosyl-L-methionine + 4 H(+) = [[Fe-S] cluster scaffold protein] + N(6)-[(R)-dihydrolipoyl]-L-lysyl-[protein] + 4 Fe(3+) + 2 hydrogen sulfide + 2 5'-deoxyadenosine + 2 L-methionine + 2 reduced [2Fe-2S]-[ferredoxin]. The protein operates within protein modification; protein lipoylation via endogenous pathway; protein N(6)-(lipoyl)lysine from octanoyl-[acyl-carrier-protein]: step 2/2. Its function is as follows. Catalyzes the radical-mediated insertion of two sulfur atoms into the C-6 and C-8 positions of the octanoyl moiety bound to the lipoyl domains of lipoate-dependent enzymes, thereby converting the octanoylated domains into lipoylated derivatives. This chain is Lipoyl synthase, found in Methylococcus capsulatus (strain ATCC 33009 / NCIMB 11132 / Bath).